Here is a 304-residue protein sequence, read N- to C-terminus: Ribonuclease BN (304 aa).

Zn(2+) contacts are provided by H63, H65, D67, H68, H140, D211, and H269. The active-site Proton acceptor is the D67.

The protein belongs to the RNase Z family. RNase BN subfamily. Homodimer. Zn(2+) serves as cofactor.

Zinc phosphodiesterase, which has both exoribonuclease and endoribonuclease activities. This chain is Ribonuclease BN, found in Cronobacter sakazakii (strain ATCC BAA-894) (Enterobacter sakazakii).